The following is a 358-amino-acid chain: DnaJ homolog subfamily B member 11 (358 aa).

An N-terminal signal peptide occupies residues 1 to 22 (MAPQNLGTFCLLLLYLIGTVIA). Positions 25-90 (DFYKILGVPR…EKRKQYDTYG (66 aa)) constitute a J domain. T188 is modified (phosphothreonine). N-linked (GlcNAc...) asparagine glycosylation occurs at N261.

In terms of assembly, part of a large chaperone multiprotein complex comprising DNAJB11, HSP90B1, HSPA5, HYOU, PDIA2, PDIA4, PDIA6, PPIB, SDF2L1, UGGT1 and very small amounts of ERP29, but not, or at very low levels, CALR nor CANX. Binds to denatured substrates in an ATP-independent manner. Interacts via the J domain with HSPA5 in an ATP-dependent manner. In terms of processing, contains high-mannose Endo H-sensitive carbohydrates. Cys-169, Cys-171, Cys-193 and Cys-196 form intramolecular disulfide bonds. The preferential partner for each Cys is not known.

Its subcellular location is the endoplasmic reticulum lumen. In terms of biological role, as a co-chaperone for HSPA5 it is required for proper folding, trafficking or degradation of proteins. Binds directly to both unfolded proteins that are substrates for ERAD and nascent unfolded peptide chains, but dissociates from the HSPA5-unfolded protein complex before folding is completed. May help recruiting HSPA5 and other chaperones to the substrate. Stimulates HSPA5 ATPase activity. It is necessary for maturation and correct trafficking of PKD1. This Bos taurus (Bovine) protein is DnaJ homolog subfamily B member 11 (DNAJB11).